A 542-amino-acid chain; its full sequence is Anaerobic glycerol-3-phosphate dehydrogenase subunit A (542 aa).

10–38 is a binding site for FAD; the sequence is DVIIIGGGATGAGIARDCALRGLRVILVE.

This sequence belongs to the FAD-dependent glycerol-3-phosphate dehydrogenase family. Composed of a catalytic GlpA/B dimer and of membrane bound GlpC. FAD is required as a cofactor. FMN serves as cofactor.

The protein resides in the cell inner membrane. It catalyses the reaction a quinone + sn-glycerol 3-phosphate = dihydroxyacetone phosphate + a quinol. Its pathway is polyol metabolism; glycerol degradation via glycerol kinase pathway; glycerone phosphate from sn-glycerol 3-phosphate (anaerobic route): step 1/1. Its function is as follows. Conversion of glycerol 3-phosphate to dihydroxyacetone. Uses fumarate or nitrate as electron acceptor. The polypeptide is Anaerobic glycerol-3-phosphate dehydrogenase subunit A (glpA) (Escherichia coli O157:H7).